A 209-amino-acid polypeptide reads, in one-letter code: Ubiquitin-conjugating enzyme E2 S (209 aa).

Residues 14 to 160 (QTIRQVMREL…ARMMTEIHAQ (147 aa)) form the UBC core domain. C98 functions as the Glycyl thioester intermediate in the catalytic mechanism. Residues 162–209 (AKCGAGAHGDDKDDDGPSTKKHAGLDKKLQDKKKEKLLKEKKRMLKRL) are disordered. The span at 169–199 (HGDDKDDDGPSTKKHAGLDKKLQDKKKEKLL) shows a compositional bias: basic and acidic residues. Residues 200–209 (KEKKRMLKRL) are compositionally biased toward basic residues.

This sequence belongs to the ubiquitin-conjugating enzyme family.

The catalysed reaction is S-ubiquitinyl-[E1 ubiquitin-activating enzyme]-L-cysteine + [E2 ubiquitin-conjugating enzyme]-L-cysteine = [E1 ubiquitin-activating enzyme]-L-cysteine + S-ubiquitinyl-[E2 ubiquitin-conjugating enzyme]-L-cysteine.. It functions in the pathway protein modification; protein ubiquitination. Functionally, catalyzes the covalent attachment of ubiquitin to other proteins. Acts as an essential factor of the anaphase promoting complex/cyclosome (APC/C), a cell cycle-regulated ubiquitin ligase that controls progression through mitosis. Acts by specifically elongating polyubiquitin chains initiated by the E2 enzyme vih/UbcH10 on APC/C substrates, enhancing the degradation of APC/C substrates by the proteasome and promoting mitotic exit. The sequence is that of Ubiquitin-conjugating enzyme E2 S from Drosophila erecta (Fruit fly).